We begin with the raw amino-acid sequence, 216 residues long: Flavin prenyltransferase UbiX (216 aa).

FMN contacts are provided by residues 9–11 (GAS), Ser-35, and Arg-144. Residues Tyr-174 and Arg-190 each contribute to the dimethylallyl phosphate site.

This sequence belongs to the UbiX/PAD1 family.

The enzyme catalyses dimethylallyl phosphate + FMNH2 = prenylated FMNH2 + phosphate. Functionally, flavin prenyltransferase that catalyzes the synthesis of the prenylated FMN cofactor (prenyl-FMN) for 4-hydroxy-3-polyprenylbenzoic acid decarboxylase UbiD. The prenyltransferase is metal-independent and links a dimethylallyl moiety from dimethylallyl monophosphate (DMAP) to the flavin N5 and C6 atoms of FMN. The chain is Flavin prenyltransferase UbiX from Streptomyces coelicolor (strain ATCC BAA-471 / A3(2) / M145).